Reading from the N-terminus, the 129-residue chain is Small ribosomal subunit protein uS11 (129 aa).

Belongs to the universal ribosomal protein uS11 family. Part of the 30S ribosomal subunit. Interacts with proteins S7 and S18. Binds to IF-3.

Its function is as follows. Located on the platform of the 30S subunit, it bridges several disparate RNA helices of the 16S rRNA. Forms part of the Shine-Dalgarno cleft in the 70S ribosome. The sequence is that of Small ribosomal subunit protein uS11 from Bacillus cereus (strain G9842).